The following is a 120-amino-acid chain: UPF0344 protein lmo2265 (120 aa).

4 consecutive transmembrane segments (helical) span residues 3–23 (GYIHLISWVAIVVLTITALLI), 33–53 (MLQMINRVFYILVILSGIMMV), 62–82 (ILAIFKILMGIIVIGVVEMLL), and 92–112 (GMFLMIFVIVVVITISLGFYL).

This sequence belongs to the UPF0344 family.

It is found in the cell membrane. This chain is UPF0344 protein lmo2265, found in Listeria monocytogenes serovar 1/2a (strain ATCC BAA-679 / EGD-e).